Reading from the N-terminus, the 502-residue chain is Glycerol kinase (502 aa).

ADP is bound at residue Thr14. The ATP site is built by Thr14, Thr15, and Ser16. Thr14 is a binding site for sn-glycerol 3-phosphate. Arg18 serves as a coordination point for ADP. Residues Arg84, Glu85, and Tyr136 each coordinate sn-glycerol 3-phosphate. Glycerol is bound by residues Arg84, Glu85, and Tyr136. His232 is modified (phosphohistidine; by HPr). Asp246 provides a ligand contact to sn-glycerol 3-phosphate. Residues Asp246 and Gln247 each coordinate glycerol. 2 residues coordinate ADP: Thr268 and Gly311. ATP-binding residues include Thr268, Gly311, Gln315, and Gly412. ADP is bound by residues Gly412 and Asn416.

The protein belongs to the FGGY kinase family. In terms of assembly, homotetramer and homodimer (in equilibrium). Post-translationally, the phosphoenolpyruvate-dependent sugar phosphotransferase system (PTS), including enzyme I, and histidine-containing protein (HPr) are required for the phosphorylation, which leads to the activation of the enzyme.

It catalyses the reaction glycerol + ATP = sn-glycerol 3-phosphate + ADP + H(+). It participates in polyol metabolism; glycerol degradation via glycerol kinase pathway; sn-glycerol 3-phosphate from glycerol: step 1/1. Activated by phosphorylation and inhibited by fructose 1,6-bisphosphate (FBP). In terms of biological role, key enzyme in the regulation of glycerol uptake and metabolism. Catalyzes the phosphorylation of glycerol to yield sn-glycerol 3-phosphate. This Streptococcus pneumoniae serotype 19F (strain G54) protein is Glycerol kinase.